Here is a 93-residue protein sequence, read N- to C-terminus: Small ribosomal subunit protein bS20c (93 aa).

The protein belongs to the bacterial ribosomal protein bS20 family.

Its subcellular location is the plastid. The protein resides in the chloroplast. Functionally, binds directly to 16S ribosomal RNA. The polypeptide is Small ribosomal subunit protein bS20c (Phaeodactylum tricornutum (strain CCAP 1055/1)).